We begin with the raw amino-acid sequence, 84 residues long: Chymotrypsin inhibitor Ani s 6 (84 aa).

The first 22 residues, 1 to 22 (MFQSTFFLVLMVCVATARFANK), serve as a signal peptide directing secretion. 5 disulfide bridges follow: cysteine 25-cysteine 58, cysteine 34-cysteine 54, cysteine 38-cysteine 50, cysteine 42-cysteine 79, and cysteine 60-cysteine 73. One can recognise a TIL domain in the interval 25-79 (CPPNEEYNECGNPCQEKCDNGEPVICTYQCEHRCFCKQGYVRLTEDGECVPEEFC).

This sequence belongs to the serine protease inhibitor-like (TIL domain-containing) family.

The protein localises to the secreted. Its function is as follows. Inhibits alpha-chymotrypsin, but not trypsin. The sequence is that of Chymotrypsin inhibitor Ani s 6 from Anisakis simplex (Herring worm).